Reading from the N-terminus, the 345-residue chain is tRNA N6-adenosine threonylcarbamoyltransferase (345 aa).

The Fe cation site is built by His-109 and His-113. Substrate-binding positions include Thr-136 to Gly-140, Asp-169, Gly-182, Asp-186, and Asn-284. Residue Asp-312 participates in Fe cation binding.

This sequence belongs to the KAE1 / TsaD family. It depends on Fe(2+) as a cofactor.

The protein resides in the cytoplasm. It catalyses the reaction L-threonylcarbamoyladenylate + adenosine(37) in tRNA = N(6)-L-threonylcarbamoyladenosine(37) in tRNA + AMP + H(+). Functionally, required for the formation of a threonylcarbamoyl group on adenosine at position 37 (t(6)A37) in tRNAs that read codons beginning with adenine. Is involved in the transfer of the threonylcarbamoyl moiety of threonylcarbamoyl-AMP (TC-AMP) to the N6 group of A37, together with TsaE and TsaB. TsaD likely plays a direct catalytic role in this reaction. The protein is tRNA N6-adenosine threonylcarbamoyltransferase of Prosthecochloris aestuarii (strain DSM 271 / SK 413).